Consider the following 287-residue polypeptide: 4-hydroxybenzoate octaprenyltransferase (287 aa).

Transmembrane regions (helical) follow at residues 30 to 50, 89 to 109, 133 to 153, 158 to 178, 199 to 221, and 267 to 287; these read ALWI…FTVG, WEAV…ILPL, FFAI…PMAF, GHVP…SVAY, ALTF…LGIY, and NNWL…AGSF.

It belongs to the UbiA prenyltransferase family. Mg(2+) serves as cofactor.

Its subcellular location is the cell inner membrane. It carries out the reaction all-trans-octaprenyl diphosphate + 4-hydroxybenzoate = 4-hydroxy-3-(all-trans-octaprenyl)benzoate + diphosphate. It participates in cofactor biosynthesis; ubiquinone biosynthesis. Catalyzes the prenylation of para-hydroxybenzoate (PHB) with an all-trans polyprenyl group. Mediates the second step in the final reaction sequence of ubiquinone-8 (UQ-8) biosynthesis, which is the condensation of the polyisoprenoid side chain with PHB, generating the first membrane-bound Q intermediate 3-octaprenyl-4-hydroxybenzoate. The polypeptide is 4-hydroxybenzoate octaprenyltransferase (Paraburkholderia phytofirmans (strain DSM 17436 / LMG 22146 / PsJN) (Burkholderia phytofirmans)).